The primary structure comprises 34 residues: Voltage sensor toxin 3 (34 aa).

3 disulfides stabilise this stretch: cysteine 2-cysteine 17, cysteine 9-cysteine 22, and cysteine 16-cysteine 29.

This sequence belongs to the neurotoxin 10 (Hwtx-1) family. 61 (VSTX3) subfamily. As to expression, expressed by the venom gland.

The protein localises to the secreted. Functionally, potent voltage-gated sodium channel blocker (IC(50)=190 nM and 210 nM on human and rat Nav1.3/SCN3A respectively, 430 nM on human Nav1.7/SCN9A, 770 nM and 290 nM on human and rat Nav1.8/SCN10A, respectively). Binds the voltage-sensor domain of the potassium channel KvAP (from Aeropyrum pernix) and weakly inhibits this channel. The protein is Voltage sensor toxin 3 of Grammostola rosea (Chilean rose tarantula).